We begin with the raw amino-acid sequence, 305 residues long: Serine/threonine-protein phosphatase 4 catalytic subunit (305 aa).

Positions 52, 54, 80, and 112 each coordinate Mn(2+). The active-site Proton donor is His-113. Mn(2+) contacts are provided by His-162 and His-236.

It belongs to the PPP phosphatase family. PP-4 (PP-X) subfamily. Serine/threonine-protein phosphatase 4 (PP4) occurs in different assemblies of the catalytic and one or more regulatory subunits. Probably part of a PP4 complex containing ppp4c and ppp4r2. Interacts with smkA. The cofactor is Mn(2+).

It is found in the cytoplasm. The protein localises to the nucleus. The catalysed reaction is O-phospho-L-seryl-[protein] + H2O = L-seryl-[protein] + phosphate. The enzyme catalyses O-phospho-L-threonyl-[protein] + H2O = L-threonyl-[protein] + phosphate. Its function is as follows. Required for development, chemotaxis and the expression of numerous genes. This Dictyostelium discoideum (Social amoeba) protein is Serine/threonine-protein phosphatase 4 catalytic subunit (ppp4c).